The chain runs to 506 residues: Galactose/methyl galactoside import ATP-binding protein MglA (506 aa).

ABC transporter domains follow at residues 14–249 (LTMT…VGRE) and 260–506 (TPKE…AKYL). 46-53 (GENGAGKS) contacts ATP.

The protein belongs to the ABC transporter superfamily. Galactose/methyl galactoside importer (TC 3.A.1.2.3) family. The complex is composed of one ATP-binding protein (MglA), two transmembrane proteins (MglC) and a solute-binding protein (MglB).

The protein resides in the cell inner membrane. It carries out the reaction D-galactose(out) + ATP + H2O = D-galactose(in) + ADP + phosphate + H(+). The catalysed reaction is methyl beta-D-galactoside(out) + ATP + H2O = methyl beta-D-galactoside(in) + ADP + phosphate + H(+). Functionally, part of the ABC transporter complex MglABC involved in galactose/methyl galactoside import. Responsible for energy coupling to the transport system. The sequence is that of Galactose/methyl galactoside import ATP-binding protein MglA from Pasteurella multocida (strain Pm70).